The chain runs to 308 residues: GTP cyclohydrolase MptA (308 aa).

The segment at 282–308 is disordered; the sequence is NDESIHQHNAHAEREVTLGQLRDELDA.

It belongs to the GTP cyclohydrolase IV family. As to quaternary structure, homodimer. Fe(2+) serves as cofactor.

The enzyme catalyses GTP + H2O = 7,8-dihydroneopterin 2',3'-cyclic phosphate + formate + diphosphate + H(+). The protein operates within cofactor biosynthesis; 5,6,7,8-tetrahydromethanopterin biosynthesis. In terms of biological role, converts GTP to 7,8-dihydro-D-neopterin 2',3'-cyclic phosphate, the first intermediate in the biosynthesis of coenzyme methanopterin. Involved in archaeosine (G(+)) and folate biosynthesis. The protein is GTP cyclohydrolase MptA of Haloferax volcanii (strain ATCC 29605 / DSM 3757 / JCM 8879 / NBRC 14742 / NCIMB 2012 / VKM B-1768 / DS2) (Halobacterium volcanii).